The following is a 134-amino-acid chain: Early E3B 14.9 kDa protein (134 aa).

Residues 1–19 (MQAMLPVILILLLPCIALA) form the signal peptide. The chain crosses the membrane as a helical span at residues 54–78 (YWIVIVGIINILSCTFFSITIYPTF).

Belongs to the adenoviridae E3_14 family. Post-translationally, phosphorylated on serine; O-glycosylated, but not N-glycosylated.

The protein localises to the host membrane. Down-regulates the EGF receptor and prevents cytolysis by TNF. This chain is Early E3B 14.9 kDa protein, found in Homo sapiens (Human).